We begin with the raw amino-acid sequence, 53 residues long: Light-harvesting protein B-808/866 beta chain (53 aa).

Met1 bears the N-formylmethionine mark. Residues 1-25 lie on the Cytoplasmic side of the membrane; sequence MRDDDDLVPPKWRPLFNNQDWLLHD. His24 and His42 together coordinate a bacteriochlorophyll. A helical membrane pass occupies residues 26-48; sequence IVVKSFYGFGVIAAIAHLLVYLW. Residues 49–53 are Periplasmic-facing; the sequence is KPWLP.

The protein belongs to the antenna complex beta subunit family. The core complex is formed by different alpha and beta chains, binding bacteriochlorophyll molecules, and arranged most probably in tetrameric structures disposed around the reaction center. The non-pigmented gamma chains may constitute additional components.

Its subcellular location is the cell membrane. Antenna complexes are light-harvesting systems, which transfer the excitation energy to the reaction centers. The polypeptide is Light-harvesting protein B-808/866 beta chain (puf2B) (Chloroflexus aurantiacus (strain ATCC 29366 / DSM 635 / J-10-fl)).